A 1196-amino-acid polypeptide reads, in one-letter code: Chromosome partition protein Smc (1196 aa).

32–39 contacts ATP; the sequence is PNGSGKSN. 2 coiled-coil regions span residues 168–288 and 327–497; these read LKHR…SVQQ and DALE…LERK. The region spanning 510 to 621 is the SMC hinge domain; that stretch reads AGILGPMAKL…VDDLDRALAL (112 aa). Coiled-coil stretches lie at residues 654–829 and 972–1026; these read LEVT…RAQQ and DRPT…KDLL.

Belongs to the SMC family. As to quaternary structure, homodimer.

It is found in the cytoplasm. Required for chromosome condensation and partitioning. In Mycolicibacterium paratuberculosis (strain ATCC BAA-968 / K-10) (Mycobacterium paratuberculosis), this protein is Chromosome partition protein Smc.